Reading from the N-terminus, the 297-residue chain is ATP synthase gamma chain (297 aa).

This sequence belongs to the ATPase gamma chain family. In terms of assembly, F-type ATPases have 2 components, CF(1) - the catalytic core - and CF(0) - the membrane proton channel. CF(1) has five subunits: alpha(3), beta(3), gamma(1), delta(1), epsilon(1). CF(0) has three main subunits: a, b and c.

The protein localises to the cell membrane. Functionally, produces ATP from ADP in the presence of a proton gradient across the membrane. The gamma chain is believed to be important in regulating ATPase activity and the flow of protons through the CF(0) complex. The sequence is that of ATP synthase gamma chain from Beutenbergia cavernae (strain ATCC BAA-8 / DSM 12333 / CCUG 43141 / JCM 11478 / NBRC 16432 / NCIMB 13614 / HKI 0122).